A 219-amino-acid polypeptide reads, in one-letter code: Non-specific lipid transfer protein GPI-anchored 25 (219 aa).

An N-terminal signal peptide occupies residues 1-22 (MATKITGVFILILTITFSSSSA). Disulfide bonds link Cys-39/Cys-85, Cys-49/Cys-68, Cys-69/Cys-110, and Cys-83/Cys-123. An N-linked (GlcNAc...) asparagine glycan is attached at Asn-59. Asn-148 is a glycosylation site (N-linked (GlcNAc...) asparagine). Residues 152–181 (SPQSVDLAPEVSPSSDLFSPETATLAPPPP) form a disordered region. A lipid anchor (GPI-anchor amidated serine) is attached at Ser-192. Residues 193–219 (SDSLKIRNFWFPSTIIMTFATSILARI) constitute a propeptide, removed in mature form.

The protein belongs to the plant LTP family.

The protein localises to the cell membrane. Its function is as follows. Probable lipid transfer protein. The protein is Non-specific lipid transfer protein GPI-anchored 25 of Arabidopsis thaliana (Mouse-ear cress).